We begin with the raw amino-acid sequence, 448 residues long: UDP-N-acetylmuramoylalanine--D-glutamate ligase (448 aa).

112-118 contributes to the ATP binding site; that stretch reads GSNAKST.

Belongs to the MurCDEF family.

The protein localises to the cytoplasm. It carries out the reaction UDP-N-acetyl-alpha-D-muramoyl-L-alanine + D-glutamate + ATP = UDP-N-acetyl-alpha-D-muramoyl-L-alanyl-D-glutamate + ADP + phosphate + H(+). It participates in cell wall biogenesis; peptidoglycan biosynthesis. Its function is as follows. Cell wall formation. Catalyzes the addition of glutamate to the nucleotide precursor UDP-N-acetylmuramoyl-L-alanine (UMA). The protein is UDP-N-acetylmuramoylalanine--D-glutamate ligase of Acinetobacter baumannii (strain AB307-0294).